The primary structure comprises 224 residues: Deoxyribose-phosphate aldolase (224 aa).

Aspartate 92 serves as the catalytic Proton donor/acceptor. Lysine 154 (schiff-base intermediate with acetaldehyde) is an active-site residue. The active-site Proton donor/acceptor is the lysine 183.

The protein belongs to the DeoC/FbaB aldolase family. DeoC type 1 subfamily.

It localises to the cytoplasm. The catalysed reaction is 2-deoxy-D-ribose 5-phosphate = D-glyceraldehyde 3-phosphate + acetaldehyde. It functions in the pathway carbohydrate degradation; 2-deoxy-D-ribose 1-phosphate degradation; D-glyceraldehyde 3-phosphate and acetaldehyde from 2-deoxy-alpha-D-ribose 1-phosphate: step 2/2. Functionally, catalyzes a reversible aldol reaction between acetaldehyde and D-glyceraldehyde 3-phosphate to generate 2-deoxy-D-ribose 5-phosphate. The chain is Deoxyribose-phosphate aldolase from Actinobacillus succinogenes (strain ATCC 55618 / DSM 22257 / CCUG 43843 / 130Z).